A 363-amino-acid polypeptide reads, in one-letter code: Ferredoxin--NADP reductase, cyanelle (363 aa).

The transit peptide at 1 to 65 (MAFVASVPVF…TFEVDTTIRA (65 aa)) directs the protein to the cyanelle. The region spanning 84–206 (ANPYIGKCIY…TGPVGTTMLM (123 aa)) is the FAD-binding FR-type domain. FAD is bound by residues 142-145 (RLYS), 163-165 (SVK), Y169, 180-182 (VCS), and T221. S145 and K165 together coordinate NADP(+). NADP(+) is bound by residues T221, 253 to 254 (VP), 283 to 284 (SR), K293, 322 to 323 (GL), and E361.

This sequence belongs to the ferredoxin--NADP reductase type 1 family. The cofactor is FAD.

It localises to the plastid. The protein resides in the cyanelle stroma. It is found in the cyanelle thylakoid membrane. It carries out the reaction 2 reduced [2Fe-2S]-[ferredoxin] + NADP(+) + H(+) = 2 oxidized [2Fe-2S]-[ferredoxin] + NADPH. Its function is as follows. May play a key role in regulating the relative amounts of cyclic and non-cyclic electron flow to meet the demands of the plant for ATP and reducing power. This is Ferredoxin--NADP reductase, cyanelle (PETH) from Cyanophora paradoxa.